The chain runs to 715 residues: Fatty acid oxidation complex subunit alpha (715 aa).

The tract at residues 1–190 (MTTTSAFMLN…KAGLVDDVVP (190 aa)) is enoyl-CoA hydratase. A 3-hydroxyacyl-CoA dehydrogenase region spans residues 306–715 (GPLNSVGILG…WTNGETDQGN (410 aa)).

In the N-terminal section; belongs to the enoyl-CoA hydratase/isomerase family. It in the central section; belongs to the 3-hydroxyacyl-CoA dehydrogenase family. In terms of assembly, heterotetramer of two alpha chains (FadJ) and two beta chains (FadI).

The protein resides in the cytoplasm. It catalyses the reaction a (3S)-3-hydroxyacyl-CoA = a (2E)-enoyl-CoA + H2O. The catalysed reaction is a 4-saturated-(3S)-3-hydroxyacyl-CoA = a (3E)-enoyl-CoA + H2O. The enzyme catalyses a (3S)-3-hydroxyacyl-CoA + NAD(+) = a 3-oxoacyl-CoA + NADH + H(+). It carries out the reaction (3S)-3-hydroxybutanoyl-CoA = (3R)-3-hydroxybutanoyl-CoA. It participates in lipid metabolism; fatty acid beta-oxidation. Catalyzes the formation of a hydroxyacyl-CoA by addition of water on enoyl-CoA. Also exhibits 3-hydroxyacyl-CoA epimerase and 3-hydroxyacyl-CoA dehydrogenase activities. The protein is Fatty acid oxidation complex subunit alpha of Salmonella agona (strain SL483).